Consider the following 183-residue polypeptide: Inosine/xanthosine triphosphatase (183 aa).

This sequence belongs to the YjjX NTPase family. As to quaternary structure, homodimer. Mg(2+) is required as a cofactor. Requires Mn(2+) as cofactor.

The catalysed reaction is XTP + H2O = XDP + phosphate + H(+). The enzyme catalyses ITP + H2O = IDP + phosphate + H(+). Its function is as follows. Phosphatase that hydrolyzes non-canonical purine nucleotides such as XTP and ITP to their respective diphosphate derivatives. Probably excludes non-canonical purines from DNA/RNA precursor pool, thus preventing their incorporation into DNA/RNA and avoiding chromosomal lesions. In Vibrio cholerae serotype O1 (strain ATCC 39315 / El Tor Inaba N16961), this protein is Inosine/xanthosine triphosphatase.